We begin with the raw amino-acid sequence, 163 residues long: Small ribosomal subunit protein uS5 (163 aa).

One can recognise an S5 DRBM domain in the interval 11 to 74 (LTDRVVHINR…EQAKKNLIRV (64 aa)).

The protein belongs to the universal ribosomal protein uS5 family. As to quaternary structure, part of the 30S ribosomal subunit. Contacts proteins S4 and S8.

Functionally, with S4 and S12 plays an important role in translational accuracy. Its function is as follows. Located at the back of the 30S subunit body where it stabilizes the conformation of the head with respect to the body. The protein is Small ribosomal subunit protein uS5 of Syntrophotalea carbinolica (strain DSM 2380 / NBRC 103641 / GraBd1) (Pelobacter carbinolicus).